The following is a 973-amino-acid chain: Putative helicase 022R (973 aa).

The disordered stretch occupies residues 473-502; sequence AKARGGRDSGNEDDEEDSATDEDDSNPWDS. The segment covering 483–498 has biased composition (acidic residues); that stretch reads NEDDEEDSATDEDDSN. One can recognise an SF3 helicase domain in the interval 658–840; the sequence is GPVTKLLAFF…FVTPGTTAPA (183 aa). ATP is bound at residue 702–709; the sequence is GTGNNGKT.

This is Putative helicase 022R from Frog virus 3 (isolate Goorha) (FV-3).